The sequence spans 272 residues: Bis(5'-nucleosyl)-tetraphosphatase, symmetrical (272 aa).

It belongs to the Ap4A hydrolase family.

It catalyses the reaction P(1),P(4)-bis(5'-adenosyl) tetraphosphate + H2O = 2 ADP + 2 H(+). Hydrolyzes diadenosine 5',5'''-P1,P4-tetraphosphate to yield ADP. The chain is Bis(5'-nucleosyl)-tetraphosphatase, symmetrical from Ectopseudomonas mendocina (strain ymp) (Pseudomonas mendocina).